A 271-amino-acid chain; its full sequence is Mannosyl-3-phosphoglycerate phosphatase (271 aa).

Catalysis depends on Asp-13, which acts as the Nucleophile. The Mg(2+) site is built by Asp-13, Asp-15, and Asp-214.

This sequence belongs to the HAD-like hydrolase superfamily. MPGP family. Requires Mg(2+) as cofactor.

It is found in the cytoplasm. The catalysed reaction is 2-O-(alpha-D-mannosyl)-3-phosphoglycerate + H2O = (2R)-2-O-(alpha-D-mannosyl)-glycerate + phosphate. The chain is Mannosyl-3-phosphoglycerate phosphatase (yedP) from Escherichia coli O6:H1 (strain CFT073 / ATCC 700928 / UPEC).